Reading from the N-terminus, the 503-residue chain is Protein O-glucosyltransferase 3 (503 aa).

The signal sequence occupies residues 1-19 (MQALPLGLQLALLVAAGAG). One copy of the Filamin repeat lies at 19-129 (GARVSAPRSL…VAHSPYILKG (111 aa)). N-linked (GlcNAc...) asparagine glycans are attached at residues Asn-56 and Asn-302. The short motif at 500–503 (REEL) is the Prevents secretion from ER element.

Belongs to the KDELC family.

The protein localises to the endoplasmic reticulum lumen. The enzyme catalyses L-seryl-[EGF-like domain protein] + UDP-alpha-D-glucose = 3-O-(beta-D-glucosyl)-L-seryl-[EGF-like domain protein] + UDP + H(+). It carries out the reaction L-seryl-[EGF-like domain protein] + UDP-alpha-D-xylose = 3-O-(beta-D-xylosyl)-L-seryl-[EGF-like domain protein] + UDP + H(+). Its pathway is protein modification; protein glycosylation. Its function is as follows. Protein glucosyltransferase that catalyzes the transfer of glucose from UDP-glucose to a serine residue within the consensus sequence peptide C-X-N-T-X-G-S-F-X-C. Can also catalyze the transfer of xylose from UDP-xylose but less efficiently. Specifically targets extracellular EGF repeats of proteins such as NOTCH1, NOTCH3, FBN1, FBN2 and LTBP1. May regulate the transport of NOTCH1 and NOTCH3 to the plasma membrane and thereby the Notch signaling pathway. The polypeptide is Protein O-glucosyltransferase 3 (Poglut3) (Mus musculus (Mouse)).